We begin with the raw amino-acid sequence, 347 residues long: Protein RecA (347 aa).

66-73 (GPESSGKT) lines the ATP pocket.

Belongs to the RecA family.

The protein resides in the cytoplasm. Can catalyze the hydrolysis of ATP in the presence of single-stranded DNA, the ATP-dependent uptake of single-stranded DNA by duplex DNA, and the ATP-dependent hybridization of homologous single-stranded DNAs. It interacts with LexA causing its activation and leading to its autocatalytic cleavage. The sequence is that of Protein RecA from Burkholderia cepacia (Pseudomonas cepacia).